We begin with the raw amino-acid sequence, 412 residues long: Na(+)-translocating NADH-quinone reductase subunit B (412 aa).

3 helical membrane passes run 57-77, 127-147, and 163-183; these read MILV…NVGL, VFFL…EVLF, and SILF…ALGI. At T236 the chain carries FMN phosphoryl threonine. The next 5 membrane-spanning stretches (helical) occupy residues 270 to 290, 297 to 317, 322 to 342, 358 to 378, and 381 to 401; these read GSIG…ILFG, IVAG…VIGS, MFSM…GMMF, WSYG…NPAY, and GMML…YLVV.

Belongs to the NqrB/RnfD family. In terms of assembly, composed of six subunits; NqrA, NqrB, NqrC, NqrD, NqrE and NqrF. It depends on FMN as a cofactor.

The protein resides in the cell inner membrane. It carries out the reaction a ubiquinone + n Na(+)(in) + NADH + H(+) = a ubiquinol + n Na(+)(out) + NAD(+). In terms of biological role, NQR complex catalyzes the reduction of ubiquinone-1 to ubiquinol by two successive reactions, coupled with the transport of Na(+) ions from the cytoplasm to the periplasm. NqrA to NqrE are probably involved in the second step, the conversion of ubisemiquinone to ubiquinol. This is Na(+)-translocating NADH-quinone reductase subunit B from Klebsiella pneumoniae (strain 342).